Here is a 143-residue protein sequence, read N- to C-terminus: Myocilin opposite strand protein (143 aa).

The segment at 65–111 is disordered; sequence MATRDETITKKSGEGEEMLPSMGMDHESPSKAHLMVPPAPPPSPADA. Residues 66 to 78 show a composition bias toward basic and acidic residues; that stretch reads ATRDETITKKSGE.

This chain is Myocilin opposite strand protein, found in Mus musculus (Mouse).